The following is a 352-amino-acid chain: Uroporphyrinogen decarboxylase (352 aa).

Residues 26–30, D76, Y153, S208, and H323 contribute to the substrate site; that span reads RQAGR.

This sequence belongs to the uroporphyrinogen decarboxylase family. Homodimer.

Its subcellular location is the cytoplasm. The enzyme catalyses uroporphyrinogen III + 4 H(+) = coproporphyrinogen III + 4 CO2. Its pathway is porphyrin-containing compound metabolism; protoporphyrin-IX biosynthesis; coproporphyrinogen-III from 5-aminolevulinate: step 4/4. Catalyzes the decarboxylation of four acetate groups of uroporphyrinogen-III to yield coproporphyrinogen-III. This chain is Uroporphyrinogen decarboxylase, found in Prochlorococcus marinus (strain MIT 9303).